Here is a 1002-residue protein sequence, read N- to C-terminus: UPF0182 protein Mvan_1814 (1002 aa).

A run of 7 helical transmembrane segments spans residues V16–D36, L61–L81, L112–Y132, F174–I194, I209–D229, K258–L278, and I286–V306. Residues L891–K958 form a disordered region. The span at G893–P923 shows a compositional bias: low complexity. Residues P937–G950 are compositionally biased toward pro residues.

The protein belongs to the UPF0182 family.

The protein localises to the cell membrane. This chain is UPF0182 protein Mvan_1814, found in Mycolicibacterium vanbaalenii (strain DSM 7251 / JCM 13017 / BCRC 16820 / KCTC 9966 / NRRL B-24157 / PYR-1) (Mycobacterium vanbaalenii).